A 112-amino-acid polypeptide reads, in one-letter code: Protein FAM32A (112 aa).

The tract at residues 15 to 35 (KGCGDMSLGKKKKKKNKANDQ) is disordered.

It belongs to the FAM32 family.

It localises to the nucleus. May induce G2 arrest and apoptosis. May also increase cell sensitivity to apoptotic stimuli. In Xenopus tropicalis (Western clawed frog), this protein is Protein FAM32A (fam32a).